Here is a 235-residue protein sequence, read N- to C-terminus: Chaperone protein TorD (235 aa).

It belongs to the TorD/DmsD family. TorD subfamily.

The protein localises to the cytoplasm. Involved in the biogenesis of TorA. Acts on TorA before the insertion of the molybdenum cofactor and, as a result, probably favors a conformation of the apoenzyme that is competent for acquiring the cofactor. The sequence is that of Chaperone protein TorD from Shewanella amazonensis (strain ATCC BAA-1098 / SB2B).